The sequence spans 261 residues: Pimeloyl-[acyl-carrier protein] methyl ester esterase (261 aa).

The AB hydrolase-1 domain occupies 15-243 (HLVLLHGWGL…AAHAPFISHP (229 aa)). Residues Trp22, 83 to 84 (SL), and 144 to 148 (FLALQ) each bind substrate. The active-site Nucleophile is the Ser83. Residues Asp208 and His236 contribute to the active site. His236 provides a ligand contact to substrate.

This sequence belongs to the AB hydrolase superfamily. Carboxylesterase BioH family. Monomer.

The protein localises to the cytoplasm. It carries out the reaction 6-carboxyhexanoyl-[ACP] methyl ester + H2O = 6-carboxyhexanoyl-[ACP] + methanol + H(+). Its pathway is cofactor biosynthesis; biotin biosynthesis. The physiological role of BioH is to remove the methyl group introduced by BioC when the pimeloyl moiety is complete. It allows to synthesize pimeloyl-ACP via the fatty acid synthetic pathway through the hydrolysis of the ester bonds of pimeloyl-ACP esters. The sequence is that of Pimeloyl-[acyl-carrier protein] methyl ester esterase from Proteus mirabilis (strain HI4320).